A 339-amino-acid polypeptide reads, in one-letter code: MIETAIAQLTNQENLDFTMSQQVITEIMKGQATDAQIGSFLTALAIKKATIDEIAGAATAMRSQALPFKVKRPTLEIVGTGGDRSNSFNISTTTALVVAAAGVPVTKHGNRAASSKSGAADVLEALGIKIDLTPAQSLALLERTNFAFMYAREYHQAMRFVAPARQQIKIPTIFNILGPLANPAHAEMQLLGVYRQALMAPLAEVLTRLGVKHAMVVHSRDGLDEISAAAPTDVIVINHGQQVTRILTPEQFGLTRCDHAALIGGSAQVNAAITRAVLTGEPGAPRDVVLMNAAAALHIAKPQLDLAAAFELAQQTIDQGAAAAKLAQLIQSSQAVMAS.

5-phospho-alpha-D-ribose 1-diphosphate contacts are provided by residues Gly79, 82 to 83 (GD), Ser87, 89 to 92 (NIST), 107 to 115 (KHGNRAASS), and Ala119. An anthranilate-binding site is contributed by Gly79. Position 91 (Ser91) interacts with Mg(2+). Asn110 serves as a coordination point for anthranilate. Anthranilate is bound at residue Arg165. The Mg(2+) site is built by Asp224 and Glu225.

Belongs to the anthranilate phosphoribosyltransferase family. Homodimer. Requires Mg(2+) as cofactor.

It catalyses the reaction N-(5-phospho-beta-D-ribosyl)anthranilate + diphosphate = 5-phospho-alpha-D-ribose 1-diphosphate + anthranilate. It participates in amino-acid biosynthesis; L-tryptophan biosynthesis; L-tryptophan from chorismate: step 2/5. Functionally, catalyzes the transfer of the phosphoribosyl group of 5-phosphorylribose-1-pyrophosphate (PRPP) to anthranilate to yield N-(5'-phosphoribosyl)-anthranilate (PRA). This is Anthranilate phosphoribosyltransferase from Lactiplantibacillus plantarum (strain ATCC BAA-793 / NCIMB 8826 / WCFS1) (Lactobacillus plantarum).